The chain runs to 308 residues: uncharacterized protein (308 aa).

Leucine 50, aspartate 90, asparagine 117, tyrosine 182, lysine 186, isoleucine 222, and threonine 224 together coordinate NADP(+). Tyrosine 182 functions as the Proton acceptor in the catalytic mechanism. The active-site Lowers pKa of active site Tyr is lysine 186.

It belongs to the short-chain dehydrogenases/reductases (SDR) family.

This is an uncharacterized protein from Saccharomyces cerevisiae (strain ATCC 204508 / S288c) (Baker's yeast).